Reading from the N-terminus, the 406-residue chain is Tyrosine-protein phosphatase non-receptor type 2 (406 aa).

The region spanning 5-275 (IEREFEELDA…RFSYMAIIEG (271 aa)) is the Tyrosine-protein phosphatase domain. Position 22 is a phosphotyrosine (Tyr22). Ser52 carries the phosphoserine modification. Tyr68 bears the Phosphotyrosine mark. Substrate contacts are provided by residues Asp182, 216-222 (CSAGIGR), and Gln260. Cys216 serves as the catalytic Phosphocysteine intermediate. Cys216 bears the S-nitrosocysteine mark. Phosphoserine occurs at positions 293, 298, 304, 320, and 339. Positions 341-406 (ESILRKRIRE…ALVGWTLLFH (66 aa)) are endoplasmic reticulum location. Residues 371–406 (ERKRKRWLYWQPILTKMGFVSVILVGALVGWTLLFH) are mediates interaction with STX17.

The protein belongs to the protein-tyrosine phosphatase family. Non-receptor class 1 subfamily. In terms of assembly, interacts with RMDN3. Isoform 1 interacts with TMED9. Isoform 1 interacts with STX17; dephosphorylates STX17. Interacts with ITGA1 (via cytoplasmic domain); activates the phosphatase activity towards EGFR. Interacts with TRAF2; probably involved in tumor necrosis factor-mediated signaling. Interacts with MET. Interacts with FAM220A and STAT3; interaction with FAM220A promotes interaction of PTPN2 with transcriptional activator STAT3, leading to dephosphorylation of STAT3 by PTPN2 and negative regulation of STAT3 transcriptional activator activity. Post-translationally, specifically phosphorylated in a cell cycle-dependent manner by cyclin-dependent kinases CDK1 and CDK2. Probably activated through phosphorylation by PKR. In terms of tissue distribution, ubiquitously expressed. The highest expression levels were found in ovary, testis, thymus and kidney.

It localises to the endoplasmic reticulum. The protein resides in the endoplasmic reticulum-Golgi intermediate compartment. It is found in the nucleus. The protein localises to the cytoplasm. Its subcellular location is the cell membrane. The catalysed reaction is O-phospho-L-tyrosyl-[protein] + H2O = L-tyrosyl-[protein] + phosphate. In terms of biological role, non-receptor type tyrosine-specific phosphatase that dephosphorylates receptor protein tyrosine kinases including INSR, EGFR, CSF1R, PDGFR. Also dephosphorylates non-receptor protein tyrosine kinases like JAK1, JAK2, JAK3, Src family kinases, STAT1, STAT3 and STAT6 either in the nucleus or the cytoplasm. Negatively regulates numerous signaling pathways and biological processes like hematopoiesis, inflammatory response, cell proliferation and differentiation, and glucose homeostasis. Plays a multifaceted and important role in the development of the immune system. Functions in T-cell receptor signaling through dephosphorylation of FYN and LCK to control T-cells differentiation and activation. Dephosphorylates CSF1R, negatively regulating its downstream signaling and macrophage differentiation. Negatively regulates cytokine (IL2/interleukin-2 and interferon)-mediated signaling through dephosphorylation of the cytoplasmic kinases JAK1, JAK3 and their substrate STAT1, that propagate signaling downstream of the cytokine receptors. Also regulates the IL6/interleukin-6 and IL4/interleukin-4 cytokine signaling through dephosphorylation of STAT3 and STAT6 respectively. In addition to the immune system, it is involved in anchorage-dependent, negative regulation of EGF-stimulated cell growth. Activated by the integrin ITGA1/ITGB1, it dephosphorylates EGFR and negatively regulates EGF signaling. Dephosphorylates PDGFRB and negatively regulates platelet-derived growth factor receptor-beta signaling pathway and therefore cell proliferation. Negatively regulates tumor necrosis factor-mediated signaling downstream via MAPK through SRC dephosphorylation. May also regulate the hepatocyte growth factor receptor signaling pathway through dephosphorylation of the hepatocyte growth factor receptor MET. Also plays an important role in glucose homeostasis. For instance, negatively regulates the insulin receptor signaling pathway through the dephosphorylation of INSR and control gluconeogenesis and liver glucose production through negative regulation of the IL6 signaling pathways. May also bind DNA. In Mus musculus (Mouse), this protein is Tyrosine-protein phosphatase non-receptor type 2 (Ptpn2).